Here is a 140-residue protein sequence, read N- to C-terminus: Nucleoside diphosphate kinase (140 aa).

6 residues coordinate ATP: K11, F59, R87, T93, R104, and N114. Catalysis depends on H117, which acts as the Pros-phosphohistidine intermediate.

This sequence belongs to the NDK family. Homotetramer. Requires Mg(2+) as cofactor.

It is found in the cytoplasm. The enzyme catalyses a 2'-deoxyribonucleoside 5'-diphosphate + ATP = a 2'-deoxyribonucleoside 5'-triphosphate + ADP. It carries out the reaction a ribonucleoside 5'-diphosphate + ATP = a ribonucleoside 5'-triphosphate + ADP. Functionally, major role in the synthesis of nucleoside triphosphates other than ATP. The ATP gamma phosphate is transferred to the NDP beta phosphate via a ping-pong mechanism, using a phosphorylated active-site intermediate. This is Nucleoside diphosphate kinase from Persephonella marina (strain DSM 14350 / EX-H1).